We begin with the raw amino-acid sequence, 451 residues long: UDP-N-acetylmuramoylalanine--D-glutamate ligase (451 aa).

118–124 (GTKGKST) is an ATP binding site.

The protein belongs to the MurCDEF family.

The protein localises to the cytoplasm. The enzyme catalyses UDP-N-acetyl-alpha-D-muramoyl-L-alanine + D-glutamate + ATP = UDP-N-acetyl-alpha-D-muramoyl-L-alanyl-D-glutamate + ADP + phosphate + H(+). It participates in cell wall biogenesis; peptidoglycan biosynthesis. Its function is as follows. Cell wall formation. Catalyzes the addition of glutamate to the nucleotide precursor UDP-N-acetylmuramoyl-L-alanine (UMA). The chain is UDP-N-acetylmuramoylalanine--D-glutamate ligase from Borreliella burgdorferi (strain ZS7) (Borrelia burgdorferi).